A 436-amino-acid chain; its full sequence is MGQVLPLVTRQGDRIAIVSGLRTPFARQATAFHGIPAVDLGKMVVGELLARSEIPAEVIEQLVFGQVVQMPEAPNIAREIVLGTGMNVHTDAYSVSRACATSFQAVANVAESLMAGTIRAGIAGGADSSSVLPIGVSKKLARVLVDVNKARTMSQRLKLFSRLRLRDLMPVPPAVAEYSTGLRMGDTAEQMAKTYGITREQQDALAHRSHQRAAQAWSDGKLKEEVMTAFIPPYKQPLVEDNNIRGNSSLADYAKLRPAFDRKHGTVTAANSTPLTDGAAAVILMTESRAKELGLVPLGYLRSYAFTAIDVWQDMLFGPAWSTPLALERAGLTMSDLTLIDMHEAFAAQTLANIQLLGSERFACEVLGRAHATGEVDDSKFNVLGGSIAYGHPFAATGAWMITQTLHELRRRGGGFGLVTACAAGGLGAAMVLEAE.

The Acyl-thioester intermediate role is filled by Cys-99. Active-site proton acceptor residues include His-392 and Cys-422.

The protein belongs to the thiolase-like superfamily. Thiolase family. As to quaternary structure, heterotetramer of two alpha chains (FadJ) and two beta chains (FadI).

It localises to the cytoplasm. It carries out the reaction an acyl-CoA + acetyl-CoA = a 3-oxoacyl-CoA + CoA. Its pathway is lipid metabolism; fatty acid beta-oxidation. Catalyzes the final step of fatty acid oxidation in which acetyl-CoA is released and the CoA ester of a fatty acid two carbons shorter is formed. The polypeptide is 3-ketoacyl-CoA thiolase (Shigella boydii serotype 4 (strain Sb227)).